The following is a 130-amino-acid chain: Lysozyme C (130 aa).

Residues K1–L130 form the C-type lysozyme domain. Disulfide bonds link C6–C128, C30–C116, C65–C81, and C77–C95. Residues E35 and D53 contribute to the active site.

Belongs to the glycosyl hydrolase 22 family. Monomer.

It catalyses the reaction Hydrolysis of (1-&gt;4)-beta-linkages between N-acetylmuramic acid and N-acetyl-D-glucosamine residues in a peptidoglycan and between N-acetyl-D-glucosamine residues in chitodextrins.. Lysozymes have primarily a bacteriolytic function; those in tissues and body fluids are associated with the monocyte-macrophage system and enhance the activity of immunoagents. The polypeptide is Lysozyme C (LYZ) (Camelus dromedarius (Dromedary)).